A 199-amino-acid chain; its full sequence is MLVKTHITKIGVTLFAVALFYGFIYMLSNSLFATRPATAVAVGADGKALLPSVDEAAMPAKAPAAAAPAAETAEAAAPAEPAAPPPPAYVEVDPATITGDAKAGEEKFNKTCKACHKIDGKNAVGPHLNGVIGRATATVEGFKYSTAMKNHVGNWTPERLDIYLVSPKAEVPGTKMSFVGLPEAADRANVIAYLNTLPR.

A helical transmembrane segment spans residues 7–27 (ITKIGVTLFAVALFYGFIYML). Residues 69-80 (AAETAEAAAPAE) show a composition bias toward low complexity. A disordered region spans residues 69–93 (AAETAEAAAPAEPAAPPPPAYVEVD). Heme c-binding residues include cysteine 112, cysteine 115, histidine 116, and methionine 148.

Post-translationally, binds 1 heme c group covalently per subunit.

Its subcellular location is the cell membrane. Functionally, electron transfer pathways that operates during photosynthesis. This is Cytochrome c-type cyt cy (cycY) from Rhodobacter capsulatus (strain ATCC BAA-309 / NBRC 16581 / SB1003).